A 408-amino-acid polypeptide reads, in one-letter code: tRNA-specific 2-thiouridylase MnmA (408 aa).

Residues 38–45 and M64 contribute to the ATP site; that span reads GMSGGVDS. An interaction with target base in tRNA region spans residues 124-126; it reads NPD. The active-site Nucleophile is C129. An intrachain disulfide couples C129 to C231. G153 serves as a coordination point for ATP. The interaction with tRNA stretch occupies residues 181–183; sequence KDQ. The active-site Cysteine persulfide intermediate is the C231. An interaction with tRNA region spans residues 348–349; sequence RY.

Belongs to the MnmA/TRMU family.

It is found in the cytoplasm. It carries out the reaction S-sulfanyl-L-cysteinyl-[protein] + uridine(34) in tRNA + AH2 + ATP = 2-thiouridine(34) in tRNA + L-cysteinyl-[protein] + A + AMP + diphosphate + H(+). In terms of biological role, catalyzes the 2-thiolation of uridine at the wobble position (U34) of tRNA, leading to the formation of s(2)U34. This is tRNA-specific 2-thiouridylase MnmA from Psychrobacter cryohalolentis (strain ATCC BAA-1226 / DSM 17306 / VKM B-2378 / K5).